A 352-amino-acid chain; its full sequence is Membrane progestin receptor alpha (352 aa).

Topologically, residues 1–75 (MATVVMEQIG…FLTLFQRHNE (75 aa)) are cytoplasmic. The helical transmembrane segment at 76 to 96 (TLNVWTHLLAAFIILVKWQEI) threads the bilayer. The Extracellular portion of the chain corresponds to 97–110 (SETVDFLRDPHAQP). Residues 111-131 (LFIVLLAAFTYLSFSALAHLL) form a helical membrane-spanning segment. Residues 132–139 (SAKSELSY) are Cytoplasmic-facing. Residues 140 to 160 (YTFYFLDYVGVAVYQYGSALA) traverse the membrane as a helical segment. Topologically, residues 161 to 175 (HYYYAIEKEWHTKVQ) are extracellular. A helical transmembrane segment spans residues 176–196 (GLFLPAAAFLAWLTCFGCCYG). Residues 197–242 (KYASPELPKVANKLFQVVPSALAYCLDISPVVHRIYSCYQEGCSDP) are Cytoplasmic-facing. Residues 243–263 (VVAYHFYHVVFFLIGAYFFCC) traverse the membrane as a helical segment. The Extracellular segment spans residues 264–275 (PHPESLFPGKCD). A helical membrane pass occupies residues 276-296 (FIGQGHQLFHVFVVVCTLTQV). The Cytoplasmic segment spans residues 297–316 (EALRTDFTERRPFYERLHGD). Residues 317-337 (LAHDAVALFIFTACCSALTAF) form a helical membrane-spanning segment. The Extracellular segment spans residues 338-352 (YVRQRVRASLHEKGE).

Belongs to the ADIPOR family. In terms of tissue distribution, strongly expressed in ovary and brain; lower expression in testis and pituitary. Not detected in heart, kidney, spleen, intestine, gill and muscle.

It localises to the cell membrane. In terms of biological role, steroid membrane receptor. Binds progesterone, progestin and 17-hydroxyprogesterone in vitro. Capable of mediating progestin-induced oocyte maturation. The chain is Membrane progestin receptor alpha (mpra) from Cynoscion nebulosus (Spotted seatrout).